A 118-amino-acid chain; its full sequence is NAD(P)H-quinone oxidoreductase subunit M (118 aa).

This sequence belongs to the complex I NdhM subunit family. In terms of assembly, NDH-1 can be composed of about 15 different subunits; different subcomplexes with different compositions have been identified which probably have different functions.

The protein resides in the cellular thylakoid membrane. It catalyses the reaction a plastoquinone + NADH + (n+1) H(+)(in) = a plastoquinol + NAD(+) + n H(+)(out). It carries out the reaction a plastoquinone + NADPH + (n+1) H(+)(in) = a plastoquinol + NADP(+) + n H(+)(out). NDH-1 shuttles electrons from an unknown electron donor, via FMN and iron-sulfur (Fe-S) centers, to quinones in the respiratory and/or the photosynthetic chain. The immediate electron acceptor for the enzyme in this species is believed to be plastoquinone. Couples the redox reaction to proton translocation, and thus conserves the redox energy in a proton gradient. Cyanobacterial NDH-1 also plays a role in inorganic carbon-concentration. The sequence is that of NAD(P)H-quinone oxidoreductase subunit M from Trichormus variabilis (strain ATCC 29413 / PCC 7937) (Anabaena variabilis).